A 198-amino-acid polypeptide reads, in one-letter code: NAD(P)H dehydrogenase (quinone) (198 aa).

One can recognise a Flavodoxin-like domain in the interval 4 to 190; the sequence is ILVLYYSMYG…ILASFQGAHV (187 aa). Residues 10–15 and 79–81 contribute to the FMN site; these read SMYGHI and TRF. Y12 contributes to the NAD(+) binding site. Substrate is bound at residue W99. FMN contacts are provided by residues 114–119 and H134; that span reads STGTGG.

Belongs to the WrbA family. The cofactor is FMN.

It catalyses the reaction a quinone + NADH + H(+) = a quinol + NAD(+). The enzyme catalyses a quinone + NADPH + H(+) = a quinol + NADP(+). The protein is NAD(P)H dehydrogenase (quinone) of Azotobacter vinelandii (strain DJ / ATCC BAA-1303).